Consider the following 331-residue polypeptide: D-alanine--D-alanine ligase (331 aa).

The region spanning 122 to 328 is the ATP-grasp domain; it reads KLWYDAIGIP…FHEFLADCIE (207 aa). 152–207 provides a ligand contact to ATP; it reads AFDKWGKLFVKAARQGSSVGCYSVTNIEQLSDAIDKAFGFSHQVLVEKAVKPRELE. Mg(2+) contacts are provided by aspartate 282, glutamate 295, and asparagine 297.

The protein belongs to the D-alanine--D-alanine ligase family. Mg(2+) is required as a cofactor. It depends on Mn(2+) as a cofactor.

The protein localises to the cytoplasm. It catalyses the reaction 2 D-alanine + ATP = D-alanyl-D-alanine + ADP + phosphate + H(+). The protein operates within cell wall biogenesis; peptidoglycan biosynthesis. Cell wall formation. The polypeptide is D-alanine--D-alanine ligase (Vibrio vulnificus (strain YJ016)).